The following is a 488-amino-acid chain: Stress activated transcription factor atfs-1 (488 aa).

The transit peptide at 1-23 (MFSRVGRLTTFGAQAVSNCPFRR) directs the protein to the mitochondrion. The tract at residues 138–191 (SWQNGSSVGHPHGHQQQQQTCQQPPTHSSTTETMHDFSNFGDNMGSPLFQSPSK) is disordered. The segment covering 142 to 168 (GSSVGHPHGHQQQQQTCQQPPTHSSTT) has biased composition (low complexity). A Glycyl lysine isopeptide (Lys-Gly) (interchain with G-Cter in smo-1) cross-link involves residue Lys-342. The segment at 353-400 (QRDDDDEDYIPASEARRTSSRLNRKSATPTYLRRRDSERSWTPASDDY) is disordered. One can recognise a bZIP domain in the interval 420 to 483 (DEETDRRRML…NSMKKELRKM (64 aa)). Residues 425–460 (RRRMLNRIAAVRYREKKRAEKKGRKMEFQEVADRNR) are basic motif. Positions 436-441 (RYREKK) match the Nuclear localization signal motif. The leucine-zipper stretch occupies residues 462–469 (LLQKERQL).

It belongs to the bZIP family. In terms of processing, may be desumoylated by ulp-4. As to expression, ubiquitously expressed.

The protein localises to the mitochondrion matrix. The protein resides in the cytoplasm. It localises to the nucleus. Functionally, acts as a transcription factor during mitochondrial stress by activating the mitochondrial unfolded protein response (mtUPR). Induces nuclear and mitochondrial gene transcription, including genes coding for mitochondrial chaperones and proteins involved in glycolysis, amino acid catabolism and innate immunity. Following mitochondrial stress, restores mitochondrial respiratory capacity by limiting the transcription of oxidative phosphorylation (OXPHOS) machinery genes and by promoting the assembly of OXPHOS complexes via the up-regulation of chaperone and assembly factor genes. Component of a feedback loop involving atfs-1, atgl-1 and hlh-11. Acts together with flp-7 to negatively regulate the expression of the transcription regulator hlh-11, to promote expression of atgl-1, and thus atgl-1-dependent fat oxidation in response to mitochondrial stress. In addition, functions with hlh-11 to maintain lifespan. Promotes mtDNA maintenance and propagation of deleterious mtDNA. This chain is Stress activated transcription factor atfs-1, found in Caenorhabditis elegans.